A 567-amino-acid chain; its full sequence is TGF-beta receptor type-2 (567 aa).

Positions 1–22 (MGRGLLRGLWPLHIVLWTRIAS) are cleaved as a signal peptide. The Extracellular portion of the chain corresponds to 23–166 (TIPPHVQKSV…NPDLLLVIFQ (144 aa)). Intrachain disulfides connect Cys-51–Cys-84, Cys-54–Cys-71, Cys-61–Cys-67, Cys-77–Cys-101, Cys-121–Cys-136, and Cys-138–Cys-143. N-linked (GlcNAc...) asparagine glycans are attached at residues Asn-70 and Asn-94. The N-linked (GlcNAc...) asparagine glycan is linked to Asn-154. A helical transmembrane segment spans residues 167 to 187 (VTGISLLPPLGVAISVIIIFY). The Cytoplasmic segment spans residues 188–567 (CYRVNRQQKL…PEDGSLNTTK (380 aa)). Positions 244–544 (IELDTLVGKG…AERFSELEHL (301 aa)) constitute a Protein kinase domain. ATP contacts are provided by residues 250 to 258 (VGKGRFAEV) and Lys-277. The active-site Proton acceptor is the Asp-379. 3 positions are modified to phosphoserine: Ser-409, Ser-548, and Ser-553. The segment at 439–567 (VESFKQTDVY…PEDGSLNTTK (129 aa)) is sufficient for interaction with CLU.

It belongs to the protein kinase superfamily. TKL Ser/Thr protein kinase family. TGFB receptor subfamily. Homodimer. Heterohexamer; TGFB1, TGFB2 and TGFB3 homodimeric ligands assemble a functional receptor composed of two TGFBR1 and TGFBR2 heterodimers to form a ligand-receptor heterohexamer. The respective affinity of TGFRB1 and TGFRB2 for the ligands may modulate the kinetics of assembly of the receptor and may explain the different biological activities of TGFB1, TGFB2 and TGFB3. Component of a complex composed of TSC22D1 (via N-terminus), TGFBR1 and TGFBR2; the interaction between TSC22D1 and TGFBR1 is inhibited by SMAD7 and promoted by TGFB1. Interacts with DAXX. Interacts with DYNLT4. Interacts with ZFYVE9; ZFYVE9 recruits SMAD2 and SMAD3 to the TGF-beta receptor. Interacts with and is activated by SCUBE3; this interaction does not affect TGFB1-binding to TGFBR2. Interacts with VPS39; this interaction is independent of the receptor kinase activity and of the presence of TGF-beta. Interacts with CLU. As to quaternary structure, homodimer; disulfide-linked. Mg(2+) serves as cofactor. Mn(2+) is required as a cofactor. Post-translationally, phosphorylated on a Ser/Thr residue in the cytoplasmic domain.

It is found in the cell membrane. Its subcellular location is the membrane raft. It localises to the secreted. It carries out the reaction L-threonyl-[receptor-protein] + ATP = O-phospho-L-threonyl-[receptor-protein] + ADP + H(+). It catalyses the reaction L-seryl-[receptor-protein] + ATP = O-phospho-L-seryl-[receptor-protein] + ADP + H(+). In terms of biological role, transmembrane serine/threonine kinase forming with the TGF-beta type I serine/threonine kinase receptor, TGFBR1, the non-promiscuous receptor for the TGF-beta cytokines TGFB1, TGFB2 and TGFB3. Transduces the TGFB1, TGFB2 and TGFB3 signal from the cell surface to the cytoplasm and thus regulates a plethora of physiological and pathological processes including cell cycle arrest in epithelial and hematopoietic cells, control of mesenchymal cell proliferation and differentiation, wound healing, extracellular matrix production, immunosuppression and carcinogenesis. The formation of the receptor complex composed of 2 TGFBR1 and 2 TGFBR2 molecules symmetrically bound to the cytokine dimer results in the phosphorylation and activation of TGFBR1 by the constitutively active TGFBR2. Activated TGFBR1 phosphorylates SMAD2 which dissociates from the receptor and interacts with SMAD4. The SMAD2-SMAD4 complex is subsequently translocated to the nucleus where it modulates the transcription of the TGF-beta-regulated genes. This constitutes the canonical SMAD-dependent TGF-beta signaling cascade. Also involved in non-canonical, SMAD-independent TGF-beta signaling pathways. Functionally, has transforming growth factor beta-activated receptor activity. Its function is as follows. Binds TGFB1, TGFB2 and TGFB3 in the picomolar affinity range without the participation of additional receptors. Blocks activation of SMAD2 and SMAD3 by TGFB1. This is TGF-beta receptor type-2 (TGFBR2) from Homo sapiens (Human).